Here is a 792-residue protein sequence, read N- to C-terminus: Phenylalanine--tRNA ligase beta subunit (792 aa).

Residues 39–147 (GEALDLILVA…EDAPIGTPLA (109 aa)) form the tRNA-binding domain. The B5 domain maps to 400–475 (PAPASILLRR…RIRGYEHLPT (76 aa)). Residues aspartate 453, aspartate 459, glutamate 462, and glutamate 463 each contribute to the Mg(2+) site. The region spanning 698–791 (SRFPFVRRDL…IQQRHDVRIR (94 aa)) is the FDX-ACB domain.

It belongs to the phenylalanyl-tRNA synthetase beta subunit family. Type 1 subfamily. Tetramer of two alpha and two beta subunits. Mg(2+) is required as a cofactor.

The protein resides in the cytoplasm. It catalyses the reaction tRNA(Phe) + L-phenylalanine + ATP = L-phenylalanyl-tRNA(Phe) + AMP + diphosphate + H(+). The chain is Phenylalanine--tRNA ligase beta subunit from Xylella fastidiosa (strain Temecula1 / ATCC 700964).